The sequence spans 152 residues: Transcriptional repressor NrdR (152 aa).

The segment at 3–34 (CPYCQHPDSDVIDTRKLHNGETIRRRRKCEAC) is a zinc-finger region. Residues 49–139 (ITVVKKNGER…VYRSFADIGK (91 aa)) form the ATP-cone domain.

Belongs to the NrdR family. The cofactor is Zn(2+).

Negatively regulates transcription of bacterial ribonucleotide reductase nrd genes and operons by binding to NrdR-boxes. The sequence is that of Transcriptional repressor NrdR from Roseiflexus sp. (strain RS-1).